Reading from the N-terminus, the 491-residue chain is Glutamine synthetase (491 aa).

Positions 23–111 (NNVRQVLCAF…MFGNVYEAWG (89 aa)) constitute a GS beta-grasp domain. The GS catalytic domain occupies 119 to 491 (PRGYVAKRYE…PWEFMKYFDI (373 aa)). 2 residues coordinate Mg(2+): Glu-143 and Glu-145. Glu-225 contacts ATP. Positions 230 and 238 each coordinate Mg(2+). Residues 282–283 (NA) and Ala-283 contribute to the L-glutamate site. His-287 is a Mg(2+) binding site. Residues 289-291 (HQS) and Ser-291 contribute to the ATP site. L-glutamate contacts are provided by Arg-344, Glu-350, and Arg-362. Residues Arg-362 and Arg-367 each coordinate ATP. A Mg(2+)-binding site is contributed by Glu-381. Arg-383 serves as a coordination point for L-glutamate.

It belongs to the glutamine synthetase family. As to quaternary structure, oligomer of 12 subunits arranged in the form of two hexagons. The cofactor is Mg(2+).

It is found in the cytoplasm. The catalysed reaction is L-glutamate + NH4(+) + ATP = L-glutamine + ADP + phosphate + H(+). Functionally, probably involved in nitrogen metabolism via ammonium assimilation. Catalyzes the ATP-dependent biosynthesis of glutamine from glutamate and ammonia. Beta-glutamate is a much poorer substrate than alpha-glutamate. This Archaeoglobus fulgidus (strain ATCC 49558 / DSM 4304 / JCM 9628 / NBRC 100126 / VC-16) protein is Glutamine synthetase.